The sequence spans 106 residues: Cell division protein FtsB (106 aa).

At 1–3 the chain is on the cytoplasmic side; it reads MGK. The chain crosses the membrane as a helical span at residues 4 to 21; sequence LTLLLLVLLGWLQYSLWL. Residues 22-106 are Periplasmic-facing; the sequence is GKNGIHDFVR…GTPSTQNNAQ (85 aa). A coiled-coil region spans residues 31 to 62; the sequence is RVKEDVAAQEANNSTLKARNDQLFAEIDDLNG.

This sequence belongs to the FtsB family. Part of a complex composed of FtsB, FtsL and FtsQ.

The protein localises to the cell inner membrane. In terms of biological role, essential cell division protein. May link together the upstream cell division proteins, which are predominantly cytoplasmic, with the downstream cell division proteins, which are predominantly periplasmic. This is Cell division protein FtsB from Yersinia pseudotuberculosis serotype O:1b (strain IP 31758).